Here is a 743-residue protein sequence, read N- to C-terminus: Threonine synthase-like 1 (743 aa).

Lys-281 carries the N6-acetyllysine modification. Residue Lys-351 is modified to N6-(pyridoxal phosphate)lysine.

This sequence belongs to the threonine synthase family. Requires pyridoxal 5'-phosphate as cofactor.

The chain is Threonine synthase-like 1 (THNSL1) from Pongo abelii (Sumatran orangutan).